The chain runs to 378 residues: ETVTGVINGKVKGGFTVELNGIRAFLPGSLVDVRPVRDTTHLEGKELEFKVIKLDQKRNNVVVSRRAVIESESSAERDQLLENLQEGMEVKGIVKNLTDYGAFVDLGGVDGLLHITDMAWKRVKHPSEIVNVGDEITVKVLKFDRERTRVSLGLKQLGEDPWVAIAKRYPEGTKLTGRVTNLTDYGCFVEIEEGVEGLVHVSEMDWTNKNIHPSKVVNVGDVVEVMVLDIDEERRRISLGLKQCKSNPWQQFAETHNKGDRVEGKIKSITDFGIFIGLEGGIDGLVHLSDISWNVAGEEAVREYKKGDEIAAVVLQVDAERERISLGVKQLAEDPFNNYLAATKKGAIVTGKVTAVDAKGATVELTLGVEGYLRASEA.

S1 motif domains lie at 1 to 66 (ETVT…VSRR), 87 to 155 (GMEV…LGLK), 172 to 242 (GTKL…LGLK), 259 to 329 (GDRV…LGVK), and 346 to 378 (GAIV…ASEA).

The protein belongs to the bacterial ribosomal protein bS1 family.

Its function is as follows. Binds mRNA; thus facilitating recognition of the initiation point. It is needed to translate mRNA with a short Shine-Dalgarno (SD) purine-rich sequence. This Providencia sp protein is Small ribosomal subunit protein bS1 (rpsA).